A 188-amino-acid chain; its full sequence is Methylamine dehydrogenase light chain (188 aa).

Positions 1 to 57 form a signal peptide, tat-type signal; the sequence is MLGNFRFDDMVEKLSRRVAGQTSRRSVIGKLGTAMLGIGLVPLLPVDRRGRVSRANA. 6 cysteine pairs are disulfide-bonded: C80–C145, C86–C118, C93–C178, C95–C143, C103–C134, and C135–C166. At W114 the chain carries Tryptophylquinone. Residues 114 to 165 constitute a cross-link (tryptophan tryptophylquinone (Trp-Trp)); the sequence is WVASCYNPTDGQSYLIAYRDCCGYNVSGRCPCLNTEGELPVYRPEFANDIIW.

It belongs to the aromatic amine dehydrogenase light chain family. As to quaternary structure, heterotetramer of two light and two heavy chains. Tryptophan tryptophylquinone residue serves as cofactor. In terms of processing, predicted to be exported by the Tat system. The position of the signal peptide cleavage has not been experimentally proven. Post-translationally, tryptophan tryptophylquinone (TTQ) is formed by oxidation of the indole ring of a tryptophan to form tryptophylquinone followed by covalent cross-linking with another tryptophan residue.

It localises to the periplasm. The enzyme catalyses 2 oxidized [amicyanin] + methylamine + H2O = 2 reduced [amicyanin] + formaldehyde + NH4(+) + 2 H(+). It functions in the pathway one-carbon metabolism; methylamine degradation; formaldehyde from methylamine: step 1/1. Functionally, methylamine dehydrogenase carries out the oxidation of methylamine. Electrons are passed from methylamine dehydrogenase to amicyanin. In Paracoccus denitrificans, this protein is Methylamine dehydrogenase light chain (mauA).